A 359-amino-acid chain; its full sequence is uncharacterized protein (359 aa).

Disordered stretches follow at residues 90–117, 132–161, and 235–359; these read QESP…PSRK, IKKE…GMTS, and TSME…THRR. The span at 151-161 shows a compositional bias: polar residues; the sequence is TPGSCSSGMTS. Low complexity predominate over residues 245–259; it reads KPPTVKSPPTVKLPP. Residues 286–299 are compositionally biased toward basic and acidic residues; the sequence is EENKEVPKEAEHKP.

This is an uncharacterized protein from Homo sapiens (Human).